The chain runs to 324 residues: Polycomb complex protein BMI-1 (324 aa).

Residues 18–57 (CVLCGGYFIDATTIIECLHSFCKTCIVRYLETSKYCPICD) form an RING-type zinc finger. The Nuclear localization signal signature appears at 81-95 (KLVPGLFKNEMKRRR). Positions 160–180 (RYLRCPAAMTVMHLRKFLRSK) are interaction with PHC2. The segment at 162-226 (LRCPAAMTVM…GPLPLKYRVR (65 aa)) is interaction with E4F1. A disordered region spans residues 232–324 (MKMSHQRDGL…LNGSSATSSG (93 aa)). Residues 264–276 (PSTSSCLPSPSTP) show a composition bias toward low complexity. Polar residues predominate over residues 277–307 (VQSPHPQFPHISSTMNGTSNSPSANHQSSFA). Low complexity predominate over residues 313 to 324 (SSLNGSSATSSG).

As to quaternary structure, component of a PRC1-like complex. Identified in a PRC1-like HPRC-H complex with CBX2, CBX4, CBX8, PHC1, PHC2, PHC3, RING1 and RNF2. Interacts with RNF2/RING2. Interacts with RING1. Part of a complex that contains RNF2, UB2D3 and BMI1, where RNF2 and BMI1 form a tight heterodimer, and UB2D3 interacts only with RNF2. The complex composed of RNF2, UB2D3 and BMI1 binds nucleosomes, and has activity only with nucleosomal histone H2A. Interacts with CBX7 and CBX8. Interacts with SPOP. Part of a complex consisting of BMI1, CUL3 and SPOP. Interacts with E4F1. Interacts with PHC2. Interacts with zinc finger protein ZNF277. May be part of a complex including at least ZNF277, BMI1 and RNF2/RING2. May be polyubiquitinated; which does not lead to proteasomal degradation. Monoubiquitinated. As to expression, detected in most organs with high expression levels in thymus, heart, brain and testis.

It localises to the nucleus. It is found in the cytoplasm. Functionally, component of a Polycomb group (PcG) multiprotein PRC1-like complex, a complex class required to maintain the transcriptionally repressive state of many genes, including Hox genes, throughout development. PcG PRC1 complex acts via chromatin remodeling and modification of histones; it mediates monoubiquitination of histone H2A 'Lys-119', rendering chromatin heritably changed in its expressibility. The complex composed of RNF2, UB2D3 and BMI1 binds nucleosomes, and has activity only with nucleosomal histone H2A. In the PRC1-like complex, regulates the E3 ubiquitin-protein ligase activity of RNF2/RING2. The sequence is that of Polycomb complex protein BMI-1 (Bmi1) from Mus musculus (Mouse).